We begin with the raw amino-acid sequence, 225 residues long: NAD(P)H-quinone oxidoreductase subunit K, chloroplastic (225 aa).

[4Fe-4S] cluster is bound by residues cysteine 43, cysteine 44, cysteine 108, and cysteine 139.

The protein belongs to the complex I 20 kDa subunit family. As to quaternary structure, NDH is composed of at least 16 different subunits, 5 of which are encoded in the nucleus. [4Fe-4S] cluster serves as cofactor.

It localises to the plastid. It is found in the chloroplast thylakoid membrane. It carries out the reaction a plastoquinone + NADH + (n+1) H(+)(in) = a plastoquinol + NAD(+) + n H(+)(out). The catalysed reaction is a plastoquinone + NADPH + (n+1) H(+)(in) = a plastoquinol + NADP(+) + n H(+)(out). In terms of biological role, NDH shuttles electrons from NAD(P)H:plastoquinone, via FMN and iron-sulfur (Fe-S) centers, to quinones in the photosynthetic chain and possibly in a chloroplast respiratory chain. The immediate electron acceptor for the enzyme in this species is believed to be plastoquinone. Couples the redox reaction to proton translocation, and thus conserves the redox energy in a proton gradient. The protein is NAD(P)H-quinone oxidoreductase subunit K, chloroplastic of Populus alba (White poplar).